A 471-amino-acid chain; its full sequence is Heparan-sulfate 6-O-sulfotransferase 3 (471 aa).

Residues 1-4 (MDER) are Cytoplasmic-facing. Residues 5-27 (FNKWLLTPVLTLLFVVIMYQYVS) traverse the membrane as a helical; Signal-anchor for type II membrane protein segment. The Lumenal portion of the chain corresponds to 28 to 471 (PSCTSSCTNF…EDYNSQVVRW (444 aa)). The interval 39 to 122 (EQPRAGEAGP…EAPENGSLPR (84 aa)) is disordered. Low complexity predominate over residues 41–62 (PRAGEAGPPAVPGPARRAQAPP). The segment covering 70–81 (QLPPPPRGPPEG) has biased composition (pro residues). A compositionally biased stretch (acidic residues) spans 88–114 (PEEEDEEPGDPREGEEEEEEDEPDPEA). N-linked (GlcNAc...) asparagine glycans are attached at residues Asn-117 and Asn-128. Residue 152-160 (HIQKTGGTT) participates in 3'-phosphoadenylyl sulfate binding. Substrate-binding positions include 182-183 (KK), Arg-199, Trp-204, and His-209. Residue His-209 is the Proton acceptor of the active site. An N-linked (GlcNAc...) asparagine glycan is attached at Asn-231. Arg-245 and Ser-253 together coordinate 3'-phosphoadenylyl sulfate. Substrate contacts are provided by His-257 and Trp-264. Residues Asn-324 and Asn-329 are each glycosylated (N-linked (GlcNAc...) asparagine). Residue 377-379 (TQF) coordinates 3'-phosphoadenylyl sulfate. Asn-380 carries an N-linked (GlcNAc...) asparagine glycan. 383–384 (RA) is a binding site for 3'-phosphoadenylyl sulfate. The interval 422–471 (TKQLEHQRDRQKRREERRLQREHRDHQWPKEDGAAEGTVTEDYNSQVVRW) is disordered. The segment covering 423–454 (KQLEHQRDRQKRREERRLQREHRDHQWPKEDG) has biased composition (basic and acidic residues). The segment covering 462–471 (EDYNSQVVRW) has biased composition (polar residues).

This sequence belongs to the sulfotransferase 6 family.

It localises to the membrane. It carries out the reaction alpha-D-glucosaminyl-[heparan sulfate](n) + 3'-phosphoadenylyl sulfate = 6-sulfo-alpha-D-glucosaminyl-[heparan sulfate](n) + adenosine 3',5'-bisphosphate + H(+). 6-O-sulfation enzyme which catalyzes the transfer of sulfate from 3'-phosphoadenosine 5'-phosphosulfate (PAPS) to position 6 of the N-sulfoglucosamine residue (GlcNS) of heparan sulfate. This Homo sapiens (Human) protein is Heparan-sulfate 6-O-sulfotransferase 3 (HS6ST3).